Consider the following 426-residue polypeptide: Enolase (426 aa).

Glutamine 163 contributes to the (2R)-2-phosphoglycerate binding site. The active-site Proton donor is the glutamate 205. The Mg(2+) site is built by aspartate 242, glutamate 285, and aspartate 312. Positions 337, 366, 367, and 388 each coordinate (2R)-2-phosphoglycerate. The Proton acceptor role is filled by lysine 337.

It belongs to the enolase family. Mg(2+) is required as a cofactor.

It localises to the cytoplasm. The protein localises to the secreted. The protein resides in the cell surface. It catalyses the reaction (2R)-2-phosphoglycerate = phosphoenolpyruvate + H2O. It functions in the pathway carbohydrate degradation; glycolysis; pyruvate from D-glyceraldehyde 3-phosphate: step 4/5. Catalyzes the reversible conversion of 2-phosphoglycerate (2-PG) into phosphoenolpyruvate (PEP). It is essential for the degradation of carbohydrates via glycolysis. The sequence is that of Enolase from Rhodospirillum centenum (strain ATCC 51521 / SW).